Here is a 409-residue protein sequence, read N- to C-terminus: Pyruvate dehydrogenase E1 component subunit alpha, mitochondrial (409 aa).

Thr6 bears the Phosphothreonine mark. Residues His109, Tyr135, Arg136, Ala174, Gly182, Val184, Asp213, Gly214, Ala215, Asn242, and Tyr244 each coordinate pyruvate. 2 residues coordinate thiamine diphosphate: Tyr135 and Arg136. The thiamine diphosphate site is built by Gly182, Val184, Asp213, Gly214, Ala215, and Asn242. Asp213 is a binding site for Mg(2+). Positions 242 and 244 each coordinate Mg(2+). Tyr306 carries the post-translational modification Phosphotyrosine. Thiamine diphosphate is bound at residue His309. Phosphoserine is present on residues Ser310 and Ser312.

In terms of assembly, tetramer of 2 alpha and 2 beta subunits. Thiamine diphosphate serves as cofactor. It depends on Mg(2+) as a cofactor.

The protein resides in the mitochondrion matrix. It catalyses the reaction N(6)-[(R)-lipoyl]-L-lysyl-[protein] + pyruvate + H(+) = N(6)-[(R)-S(8)-acetyldihydrolipoyl]-L-lysyl-[protein] + CO2. With respect to regulation, E1 activity is regulated by phosphorylation (inactivation) and dephosphorylation (activation) of the alpha subunit. The pyruvate dehydrogenase complex catalyzes the overall conversion of pyruvate to acetyl-CoA and CO(2). It contains multiple copies of three enzymatic components: pyruvate dehydrogenase (E1), dihydrolipoamide acetyltransferase (E2) and lipoamide dehydrogenase (E3). This chain is Pyruvate dehydrogenase E1 component subunit alpha, mitochondrial (pda1), found in Schizosaccharomyces pombe (strain 972 / ATCC 24843) (Fission yeast).